Consider the following 319-residue polypeptide: Acetyl-coenzyme A carboxylase carboxyl transferase subunit alpha (319 aa).

The 255-residue stretch at 39–293 (RLQKKSNDLT…KAVLEKQLHE (255 aa)) folds into the CoA carboxyltransferase C-terminal domain.

This sequence belongs to the AccA family. As to quaternary structure, acetyl-CoA carboxylase is a heterohexamer composed of biotin carboxyl carrier protein (AccB), biotin carboxylase (AccC) and two subunits each of ACCase subunit alpha (AccA) and ACCase subunit beta (AccD).

It is found in the cytoplasm. The catalysed reaction is N(6)-carboxybiotinyl-L-lysyl-[protein] + acetyl-CoA = N(6)-biotinyl-L-lysyl-[protein] + malonyl-CoA. Its pathway is lipid metabolism; malonyl-CoA biosynthesis; malonyl-CoA from acetyl-CoA: step 1/1. Its function is as follows. Component of the acetyl coenzyme A carboxylase (ACC) complex. First, biotin carboxylase catalyzes the carboxylation of biotin on its carrier protein (BCCP) and then the CO(2) group is transferred by the carboxyltransferase to acetyl-CoA to form malonyl-CoA. The protein is Acetyl-coenzyme A carboxylase carboxyl transferase subunit alpha of Neisseria meningitidis serogroup A / serotype 4A (strain DSM 15465 / Z2491).